Here is a 51-residue protein sequence, read N- to C-terminus: MARNKPLAKKLRLAKAMKQNRRVPVWVIVRTNRRVLTHPKRRHWRRTKLKE.

It belongs to the eukaryotic ribosomal protein eL39 family.

In Pyrococcus horikoshii (strain ATCC 700860 / DSM 12428 / JCM 9974 / NBRC 100139 / OT-3), this protein is Large ribosomal subunit protein eL39 (rpl39e).